The primary structure comprises 368 residues: S-adenosylmethionine decarboxylase proenzyme 1 (368 aa).

Catalysis depends on residues Glu9 and Arg12. Ser69 functions as the Schiff-base intermediate with substrate; via pyruvic acid in the catalytic mechanism. Residue Ser69 is modified to Pyruvic acid (Ser); by autocatalysis. The Proton donor; for catalytic activity role is filled by Cys83. Catalysis depends on proton acceptor; for processing activity residues Ser234 and His247.

It belongs to the eukaryotic AdoMetDC family. Requires pyruvate as cofactor. Is synthesized initially as an inactive proenzyme. Formation of the active enzyme involves a self-maturation process in which the active site pyruvoyl group is generated from an internal serine residue via an autocatalytic post-translational modification. Two non-identical subunits are generated from the proenzyme in this reaction, and the pyruvate is formed at the N-terminus of the alpha chain, which is derived from the carboxyl end of the proenzyme. The post-translation cleavage follows an unusual pathway, termed non-hydrolytic serinolysis, in which the side chain hydroxyl group of the serine supplies its oxygen atom to form the C-terminus of the beta chain, while the remainder of the serine residue undergoes an oxidative deamination to produce ammonia and the pyruvoyl group blocking the N-terminus of the alpha chain.

The catalysed reaction is S-adenosyl-L-methionine + H(+) = S-adenosyl 3-(methylsulfanyl)propylamine + CO2. The protein operates within amine and polyamine biosynthesis; S-adenosylmethioninamine biosynthesis; S-adenosylmethioninamine from S-adenosyl-L-methionine: step 1/1. The sequence is that of S-adenosylmethionine decarboxylase proenzyme 1 (SAMDC1) from Brassica juncea (Indian mustard).